A 753-amino-acid chain; its full sequence is Replication restart protein PriA (753 aa).

Residues 228–395 (SLITTKFQTC…LSKKYTLSVL (168 aa)) form the Helicase ATP-binding domain. 241 to 248 (GVTGSGKT) serves as a coordination point for ATP. The DEAH box signature appears at 337 to 340 (DEEH). Zn(2+) contacts are provided by C458, C461, C467, C470, C485, C488, C499, and C502. Residues 491–646 (RLSKPITSCP…DFPAFYKEEI (156 aa)) form the Helicase C-terminal domain.

This sequence belongs to the helicase family. PriA subfamily. In terms of assembly, component of the replication restart primosome. The cofactor is Zn(2+).

It carries out the reaction Couples ATP hydrolysis with the unwinding of duplex DNA by translocating in the 3'-5' direction.. The enzyme catalyses ATP + H2O = ADP + phosphate + H(+). Initiates the restart of stalled replication forks, which reloads the replicative helicase on sites other than the origin of replication. Recognizes and binds to abandoned replication forks and remodels them to uncover a helicase loading site. Promotes assembly of the primosome at these replication forks. This is Replication restart protein PriA from Chlamydia muridarum (strain MoPn / Nigg).